The sequence spans 367 residues: Zinc metalloproteinase nas-22 (367 aa).

An N-terminal signal peptide occupies residues 1–16; that stretch reads MKSFFILLSILQECYG. A Peptidase M12A domain is found at 41–237; that stretch reads VLIRGSDEER…LMINKYYECS (197 aa). 2 N-linked (GlcNAc...) asparagine glycosylation sites follow: Asn56 and Asn85. Disulfide bonds link Cys88–Cys236, Cys111–Cys130, Cys238–Cys258, and Cys260–Cys269. His138 provides a ligand contact to Zn(2+). Glu139 is a catalytic residue. 2 residues coordinate Zn(2+): His142 and His148. N-linked (GlcNAc...) asparagine glycosylation is found at Asn169, Asn241, and Asn254. Residues 232–270 form the EGF-like domain; the sequence is KYYECSCANNLSCKNHGYPNPSNCSQCNCPYGFGGADCS. N-linked (GlcNAc...) asparagine glycosylation is found at Asn287 and Asn322.

Requires Zn(2+) as cofactor. Expressed in uterine seam (utse) cell.

It localises to the secreted. In terms of biological role, metalloprotease. The polypeptide is Zinc metalloproteinase nas-22 (nas-22) (Caenorhabditis elegans).